A 91-amino-acid chain; its full sequence is Virion membrane protein A14 homolog (91 aa).

Residues 1–12 (MDPLGFFRNRPS) lie on the Intravirion side of the membrane. The chain crosses the membrane as a helical span at residues 13–33 (YVVVFGIILLIVACICAYIEL). Residues 34–46 (SKSGKPADSALRS) lie on the Virion surface side of the membrane. The helical transmembrane segment at 47–67 (ISIISFILAILLLLGIILFSG) threads the bilayer. At 68–91 (YNRYCTGNVVDESRYATSPGTEIQ) the chain is on the intravirion side.

The protein belongs to the chordopoxvirinae A14 family. As to quaternary structure, homodimer; disulfide-linked. Interacts with A17. In terms of processing, phosphorylated by viral F10 kinase, phosphorylation state is regulated by H1 phosphatase.

It is found in the virion membrane. Functionally, envelope protein which is a major component of the mature virion (MV) membrane. Essential for membrane biogenesis. Is required, together with A17, to form bona fide crescents, which can progress to form the immature virion (IV) membrane. A14 and A17 form a lattice that is stabilized by disulfide bonds and serves as an anchor within the viral membrane to which several other proteins important in virion structure and morphogenesis attach. In Fowlpox virus (strain NVSL) (FPV), this protein is Virion membrane protein A14 homolog.